The primary structure comprises 161 residues: 6,7-dimethyl-8-ribityllumazine synthase (161 aa).

Residues Trp26, 58-60 (AFE), and 81-83 (VVI) contribute to the 5-amino-6-(D-ribitylamino)uracil site. 86-87 (GT) lines the (2S)-2-hydroxy-3-oxobutyl phosphate pocket. Catalysis depends on His89, which acts as the Proton donor. Residue Phe114 participates in 5-amino-6-(D-ribitylamino)uracil binding. Position 128 (Arg128) interacts with (2S)-2-hydroxy-3-oxobutyl phosphate.

Belongs to the DMRL synthase family.

The catalysed reaction is (2S)-2-hydroxy-3-oxobutyl phosphate + 5-amino-6-(D-ribitylamino)uracil = 6,7-dimethyl-8-(1-D-ribityl)lumazine + phosphate + 2 H2O + H(+). Its pathway is cofactor biosynthesis; riboflavin biosynthesis; riboflavin from 2-hydroxy-3-oxobutyl phosphate and 5-amino-6-(D-ribitylamino)uracil: step 1/2. Catalyzes the formation of 6,7-dimethyl-8-ribityllumazine by condensation of 5-amino-6-(D-ribitylamino)uracil with 3,4-dihydroxy-2-butanone 4-phosphate. This is the penultimate step in the biosynthesis of riboflavin. The polypeptide is 6,7-dimethyl-8-ribityllumazine synthase (Nocardioides sp. (strain ATCC BAA-499 / JS614)).